The primary structure comprises 343 residues: General stress protein 30 (343 aa).

It belongs to the polysaccharide pyruvyl transferase family.

The protein is General stress protein 30 (yxaB) of Bacillus subtilis (strain 168).